Consider the following 577-residue polypeptide: Signal peptide peptidase-like 2B (577 aa).

Positions 1–19 (MAAARLAASLLLLAAQVAC) are cleaved as a signal peptide. Over 20 to 168 (EFGVLRVVPQ…APSEPVMDYN (149 aa)) the chain is Lumenal. One can recognise a PA domain in the interval 49–149 (LPHDLNKVSL…RDLQDIFRRF (101 aa)). Asparagine 91 carries N-linked (GlcNAc...) asparagine glycosylation. A helical membrane pass occupies residues 169-189 (MVIIFIMAVGTVALGGYWAGS). Over 190-216 (HDVKKYMKHKRDDVPEKQEDEAVDVTP) the chain is Cytoplasmic. Residues 217-237 (VMICVFVVMCCFMLVLLYYFY) form a helical membrane-spanning segment. Topologically, residues 238-239 (DR) are lumenal. A helical membrane pass occupies residues 240–260 (LVYVIIGIFCLASSTGLYSCL). Over 261–286 (APCVRKLPFCTCRVPDNNLPYFHKRP) the chain is Cytoplasmic. The helical transmembrane segment at 287–307 (QARMLLLALFCVTVSVVWGVF) threads the bilayer. At 308–312 (RNEDQ) the chain is on the lumenal side. Residues 313–333 (WAWVLQDTLGIAFCLYMLRTI) form a helical membrane-spanning segment. The Cytoplasmic portion of the chain corresponds to 334-341 (RLPTFKAC). Residues 342-362 (TLLLLVLFVYDIFFVFITPYL) form a helical membrane-spanning segment. Aspartate 352 is an active-site residue. Over 363-405 (TKSGNSIMVEVATGPSNSSTHEKLPMVLKVPRLNTSPLSLCDR) the chain is Lumenal. A helical membrane pass occupies residues 406–426 (PFSLLGFGDILVPGLLVAYCH). Residue aspartate 414 is part of the active site. The Cytoplasmic segment spans residues 427–438 (RFDIQVQSSRIY). A helical membrane pass occupies residues 439-459 (FVACTIAYGLGLLVTFVALVL). The Lumenal portion of the chain corresponds to 460–463 (MRHG). A helical transmembrane segment spans residues 464-484 (QPALLYLVPCTLLTSCTVALW). The PAL motif lies at 465-467 (PAL). At 485-577 (RREMGAFWTG…IPVVTPGTSA (93 aa)) the chain is on the cytoplasmic side. The interval 502 to 577 (QTPWAAPQGP…IPVVTPGTSA (76 aa)) is disordered.

The protein belongs to the peptidase A22B family. Monomer. Homodimer. Interacts with ITM2B and TNF. Post-translationally, glycosylated.

It localises to the cell membrane. The protein resides in the golgi apparatus membrane. It is found in the lysosome membrane. Its subcellular location is the endosome membrane. The protein localises to the membrane. Intramembrane-cleaving aspartic protease (I-CLiP) that cleaves type II membrane signal peptides in the hydrophobic plane of the membrane. Functions in ITM2B and TNF processing. Catalyzes the intramembrane cleavage of the anchored fragment of shed TNF-alpha (TNF), which promotes the release of the intracellular domain (ICD) for signaling to the nucleus. May play a role in the regulation of innate and adaptive immunity. The polypeptide is Signal peptide peptidase-like 2B (Rattus norvegicus (Rat)).